A 164-amino-acid polypeptide reads, in one-letter code: Heat shock protein beta-6 (164 aa).

Residues 1 to 72 (MEIPVSVQPS…PTAQVSTDPG (72 aa)) form an involved in stabilization of the HSPB1:HSBP6 heterodimer region. Position 16 is a phosphoserine (Ser16). Positions 56-163 (RAPSVALPTA…PLQSPPGAAA (108 aa)) constitute a sHSP domain. The residue at position 66 (Gln66) is a Deamidated glutamine. Ser157 bears the Phosphoserine mark.

It belongs to the small heat shock protein (HSP20) family. Homodimer. Small heat shock proteins form high molecular mass oligomers containing variable number of monomers; these oligomers display a very flexible quaternary structure easily exchanging their subunits. Heterooligomer with HSPB1; formed through oligomerization of HSPB1:HSBP6 dimers; subunit exchange leads to formation of at least two different heterooligomeric complexes, differing in variable quantities of HSPB1 and HSPB6 homodimers in addition to HSPB1:HSPB6 heterodimers. Heterooligomer with CRYAB; large heterooligomers consist of CRYAB homodimers and HSPB5:HSPB6 heterodimers but lacking HSPB6 homodimers. Interacts with BAG3. Interacts (phosphorylated) with YWHAZ. Interacts with PDE4A and PDE4D; required for maintenance of the non-phosphorylated state of HSPB6 under basal conditions. Interacts with KDR. Interacts with PRKD1. Post-translationally, phosphorylated at Ser-16 by PKA and probably PKD1K; required to protect cardiomyocytes from apoptosis.

It is found in the cytoplasm. It localises to the nucleus. The protein localises to the secreted. Functionally, small heat shock protein which functions as a molecular chaperone probably maintaining denatured proteins in a folding-competent state. Seems to have versatile functions in various biological processes. Plays a role in regulating muscle function such as smooth muscle vasorelaxation and cardiac myocyte contractility. May regulate myocardial angiogenesis implicating KDR. Overexpression mediates cardioprotection and angiogenesis after induced damage. Stabilizes monomeric YWHAZ thereby supporting YWHAZ chaperone-like activity. In Bos taurus (Bovine), this protein is Heat shock protein beta-6 (HSPB6).